The primary structure comprises 458 residues: 5-hydroxytryptamine receptor 2C (458 aa).

A signal peptide spans 1–32 (MVNLRNAVHSFLVHLIGLLVWQCDISVSPVAA). Residues 33–55 (IVTDIFNTSDGGRFKFPDGVQNW) are Extracellular-facing. Residues 56 to 80 (PALSIVVIIIMTIGGNILVIMAVSM) form a helical membrane-spanning segment. Over 81 to 86 (EKKLHN) the chain is Cytoplasmic. Residues 87-111 (ATNYFLMSLAIADMLVGLLVMPLSL) traverse the membrane as a helical segment. The Extracellular segment spans residues 112 to 128 (LAILYDYVWPLPRYLCP). An intrachain disulfide couples Cys127 to Cys207. A helical membrane pass occupies residues 129-151 (VWISLDVLFSTASIMHLCAISLD). Ergotamine is bound at residue Thr139. A DRY motif; important for ligand-induced conformation changes motif is present at residues 151–153 (DRY). The Cytoplasmic portion of the chain corresponds to 152–167 (RYVAIRNPIEHSRFNS). A helical transmembrane segment spans residues 168 to 189 (RTKAIMKIAIVWAISIGVSVPI). Over 190 to 213 (PVIGLRDERKVFVNNTTCVLNDPN) the chain is Extracellular. An ergotamine-binding site is contributed by Leu209. The helical transmembrane segment at 214–236 (FVLIGSFVAFFIPLTIMVITYCL) threads the bilayer. Over 237 to 311 (TIYVLRRQAL…AINNERKASK (75 aa)) the chain is Cytoplasmic. Residues 274–301 (EENSANPNQDQNARRRKKKERRPRGTMQ) form a disordered region. Residues 287–297 (RRRKKKERRPR) show a composition bias toward basic residues. The chain crosses the membrane as a helical span at residues 312 to 336 (VLGIVFFVFLIMWCPFFITNILSVL). Cys337 and Cys341 form a disulfide bridge. Over 337-347 (CEKSCNQKLME) the chain is Extracellular. The chain crosses the membrane as a helical span at residues 348 to 370 (KLLNVFVWIGYVCSGINPLVYTL). Positions 364–368 (NPLVY) match the NPxxY motif; important for ligand-induced conformation changes and signaling motif. At 371–458 (FNKIYRRAFS…SVVSERISSV (88 aa)) the chain is on the cytoplasmic side. The short motif at 456-458 (SSV) is the PDZ-binding element.

Belongs to the G-protein coupled receptor 1 family. Interacts with MPDZ. Interacts with ARRB2. Interacts with MPP3; this interaction stabilizes the receptor at the plasma membrane and prevents the desensitization of the HTR2C receptor-mediated calcium response.

The protein localises to the cell membrane. In terms of biological role, G-protein coupled receptor for 5-hydroxytryptamine (serotonin). Also functions as a receptor for various drugs and psychoactive substances, including ergot alkaloid derivatives, 1-2,5,-dimethoxy-4-iodophenyl-2-aminopropane (DOI) and lysergic acid diethylamide (LSD). Ligand binding causes a conformation change that triggers signaling via guanine nucleotide-binding proteins (G proteins) and modulates the activity of downstream effectors. HTR2C is coupled to G(q)/G(11) G alpha proteins and activates phospholipase C-beta, releasing diacylglycerol (DAG) and inositol 1,4,5-trisphosphate (IP3) second messengers that modulate the activity of phosphatidylinositol 3-kinase and promote the release of Ca(2+) ions from intracellular stores, respectively. Beta-arrestin family members inhibit signaling via G proteins and mediate activation of alternative signaling pathways. Regulates neuronal activity via the activation of short transient receptor potential calcium channels in the brain, and thereby modulates the activation of pro-opiomelanocortin neurons and the release of CRH that then regulates the release of corticosterone. Plays a role in the regulation of appetite and eating behavior, responses to anxiogenic stimuli and stress. Plays a role in insulin sensitivity and glucose homeostasis. The sequence is that of 5-hydroxytryptamine receptor 2C from Pan troglodytes (Chimpanzee).